The chain runs to 365 residues: MAVTKTIVVLPGDHVGQEITEEAIKVLNAIQECRPDKVNFKFDHHLIGGAAIDATGVPLPDEALEASKKADAVLLGAVGGPKWGTGAVRPEQGLLKIRKELQLYANLRPCNFASDSLLDLSPLKPEIARGTDFVVVRELVGGIYFGERKEDEGDGVAWDSEKYSVPEVQRITRMAAFMALQHNPPLPIWSLDKANVLASSRLWRKTVEETIKNEFPQLTVQHQLIDSAAMILVKNPTHLNGIIITNNMFGDIISDEASVIPGSLGLLPSASLASLPDKNTAFGLYEPCHGSAPDLPKGKVNPVATILSAAMMLKLSLDLFEEGEIIEQAVKKVLDSGIRTADLKGTNSTTEVGDAVAKAVRELLA.

Glycine 80–glutamate 91 contributes to the NAD(+) binding site. Residues arginine 98, arginine 108, arginine 137, and aspartate 226 each contribute to the substrate site. Residues aspartate 226, aspartate 251, and aspartate 255 each contribute to the Mg(2+) site. NAD(+) is bound at residue glycine 290 to asparagine 301.

It belongs to the isocitrate and isopropylmalate dehydrogenases family. As to quaternary structure, homodimer. Mg(2+) serves as cofactor. It depends on Mn(2+) as a cofactor.

Its subcellular location is the cytoplasm. It catalyses the reaction (2R,3S)-3-isopropylmalate + NAD(+) = 4-methyl-2-oxopentanoate + CO2 + NADH. It functions in the pathway amino-acid biosynthesis; L-leucine biosynthesis; L-leucine from 3-methyl-2-oxobutanoate: step 3/4. In terms of biological role, catalyzes the oxidation of 3-carboxy-2-hydroxy-4-methylpentanoate (3-isopropylmalate) to 3-carboxy-4-methyl-2-oxopentanoate. The product decarboxylates to 4-methyl-2 oxopentanoate. The chain is 3-isopropylmalate dehydrogenase (LEU2) from Candida glabrata (strain ATCC 2001 / BCRC 20586 / JCM 3761 / NBRC 0622 / NRRL Y-65 / CBS 138) (Yeast).